The primary structure comprises 79 residues: Acyl carrier protein (79 aa).

A Carrier domain is found at 2-77 (DNIEQRVKKI…QAIDYATAHV (76 aa)). Residue S37 is modified to O-(pantetheine 4'-phosphoryl)serine.

It belongs to the acyl carrier protein (ACP) family. Post-translationally, 4'-phosphopantetheine is transferred from CoA to a specific serine of apo-ACP by AcpS. This modification is essential for activity because fatty acids are bound in thioester linkage to the sulfhydryl of the prosthetic group.

It localises to the cytoplasm. Its pathway is lipid metabolism; fatty acid biosynthesis. Carrier of the growing fatty acid chain in fatty acid biosynthesis. This chain is Acyl carrier protein, found in Cupriavidus pinatubonensis (strain JMP 134 / LMG 1197) (Cupriavidus necator (strain JMP 134)).